The following is a 1017-amino-acid chain: Semaphorin-6D (1017 aa).

The signal sequence occupies residues 1-20; it reads MRVFLLCAYILLLMISQLRA. Residues 21–606 lie on the Extracellular side of the membrane; that stretch reads VSFPEDDEPL…GESNQMVHMN (586 aa). A Sema domain is found at 27–512; sequence DEPLNTVDYH…FSSCVIRIPL (486 aa). Asparagine 51 carries N-linked (GlcNAc...) asparagine glycosylation. 4 cysteine pairs are disulfide-bonded: cysteine 108–cysteine 118, cysteine 136–cysteine 145, cysteine 259–cysteine 370, and cysteine 284–cysteine 329. The N-linked (GlcNAc...) asparagine glycan is linked to asparagine 283. N-linked (GlcNAc...) asparagine glycosylation is found at asparagine 435 and asparagine 461. Cystine bridges form between cysteine 477-cysteine 506, cysteine 515-cysteine 533, cysteine 521-cysteine 568, and cysteine 525-cysteine 541. The 56-residue stretch at 514 to 569 folds into the PSI domain; the sequence is RCERYGSCKKSCIASRDPYCGWLSQGSCGRVTPGMLAEGYEQDAEFGNTAHLGDCH. The chain crosses the membrane as a helical span at residues 607–627; that stretch reads VLITCVFAAFVLGAFIAGVAV. Over 628–1017 the chain is Cytoplasmic; it reads YCYRDMFVRK…SVRPLNKYTY (390 aa). Phosphoserine occurs at positions 667, 678, and 688. 4 disordered regions span residues 688-719, 731-769, 783-818, and 873-912; these read SRKELPPNGDTKSMVMDHRGQPPELAALPTPE, AMKSHSEKAHGHGASRKETPQFFPSSPPPHSPLSHGHIP, TSFSNSNAHKAEKKLQNIDHPLTKSSSKRDHRRSVD, and LYSPPSTLPRNSPTKRVDVPTTPGVPMTSLGRQRGYHKNS. A Phosphothreonine modification is found at threonine 717. Residues 734 to 749 show a composition bias toward basic and acidic residues; sequence SHSEKAHGHGASRKET. Phosphoserine occurs at positions 875, 901, and 927. Polar residues predominate over residues 875-886; sequence SPPSTLPRNSPT. A compositionally biased stretch (polar residues) spans 965 to 981; it reads LQPSLSRQSSYTSNGTL. Residues 965–1017 are disordered; sequence LQPSLSRQSSYTSNGTLPRTGLKRTPSLKPDVPPKPSFVPQTPSVRPLNKYTY.

The protein belongs to the semaphorin family.

The protein localises to the cell membrane. Shows growth cone collapsing activity on dorsal root ganglion (DRG) neurons in vitro. May be a stop signal for the DRG neurons in their target areas, and possibly also for other neurons. May also be involved in the maintenance and remodeling of neuronal connections. Ligand of TREM2 with PLXNA1 as coreceptor in dendritic cells, plays a role in the generation of immune responses and skeletal homeostasis. In Pongo abelii (Sumatran orangutan), this protein is Semaphorin-6D (SEMA6D).